The sequence spans 288 residues: Histone-lysine N-methyltransferase Suv4-20 (288 aa).

The region spanning 128-238 is the SET domain; that stretch reads QECKRYSQEG…PGDEITCFYG (111 aa).

This sequence belongs to the class V-like SAM-binding methyltransferase superfamily. Histone-lysine methyltransferase family. Suvar4-20 subfamily.

It localises to the nucleus. Its subcellular location is the chromosome. The catalysed reaction is N(6)-methyl-L-lysyl(20)-[histone H4] + S-adenosyl-L-methionine = N(6),N(6)-dimethyl-L-lysyl(20)-[histone H4] + S-adenosyl-L-homocysteine + H(+). The enzyme catalyses N(6),N(6)-dimethyl-L-lysyl(20)-[histone H4] + S-adenosyl-L-methionine = N(6),N(6),N(6)-trimethyl-L-lysyl(20)-[histone H4] + S-adenosyl-L-homocysteine + H(+). Functionally, histone methyltransferase that specifically di- and trimethylates 'Lys-20' of histone H4 (H4K20me2/me3). H4 'Lys-20' trimethylation represents a specific tag for epigenetic transcriptional repression. Contributes to dosage compensation of X chromosome-relative to autosome-linked gene expression, possibly by converting H4K20me1 to H4K20m2/me3 on autosomes. Involved in the regulation of growth and body fat metabolism downstream of the TOR complex 2 pathway. This Caenorhabditis elegans protein is Histone-lysine N-methyltransferase Suv4-20 (set-4).